We begin with the raw amino-acid sequence, 1374 residues long: DNA-directed RNA polymerase subunit beta (1374 aa).

The protein belongs to the RNA polymerase beta chain family. The RNAP catalytic core consists of 2 alpha, 1 beta, 1 beta' and 1 omega subunit. When a sigma factor is associated with the core the holoenzyme is formed, which can initiate transcription.

It catalyses the reaction RNA(n) + a ribonucleoside 5'-triphosphate = RNA(n+1) + diphosphate. DNA-dependent RNA polymerase catalyzes the transcription of DNA into RNA using the four ribonucleoside triphosphates as substrates. This is DNA-directed RNA polymerase subunit beta from Methylobacterium nodulans (strain LMG 21967 / CNCM I-2342 / ORS 2060).